The sequence spans 412 residues: Tyrosine--tRNA ligase (412 aa).

An L-tyrosine-binding site is contributed by Tyr41. The 'HIGH' region signature appears at 46 to 55 (ATADSLHVGH). 2 residues coordinate L-tyrosine: Tyr174 and Gln178. A 'KMSKS' region motif is present at residues 234–238 (KMGKS). Lys237 contributes to the ATP binding site. Positions 348–411 (LSLTDLLLEH…KKQHLHLRLE (64 aa)) constitute an S4 RNA-binding domain.

It belongs to the class-I aminoacyl-tRNA synthetase family. TyrS type 1 subfamily. Homodimer.

Its subcellular location is the cytoplasm. It catalyses the reaction tRNA(Tyr) + L-tyrosine + ATP = L-tyrosyl-tRNA(Tyr) + AMP + diphosphate + H(+). In terms of biological role, catalyzes the attachment of tyrosine to tRNA(Tyr) in a two-step reaction: tyrosine is first activated by ATP to form Tyr-AMP and then transferred to the acceptor end of tRNA(Tyr). The polypeptide is Tyrosine--tRNA ligase (Pseudomonas aeruginosa (strain LESB58)).